The chain runs to 106 residues: 3-phenylpropionate/cinnamic acid dioxygenase ferredoxin subunit (106 aa).

In terms of domain architecture, Rieske spans Ile4 to Ile99. Residues Cys42, His44, Cys62, and His65 each contribute to the [2Fe-2S] cluster site.

The protein belongs to the bacterial ring-hydroxylating dioxygenase ferredoxin component family. As to quaternary structure, this dioxygenase system consists of four proteins: the two subunits of the hydroxylase component (HcaE and HcaF), a ferredoxin (HcaC) and a ferredoxin reductase (HcaD). [2Fe-2S] cluster is required as a cofactor.

It participates in aromatic compound metabolism; 3-phenylpropanoate degradation. Part of the multicomponent 3-phenylpropionate dioxygenase, that converts 3-phenylpropionic acid (PP) and cinnamic acid (CI) into 3-phenylpropionate-dihydrodiol (PP-dihydrodiol) and cinnamic acid-dihydrodiol (CI-dihydrodiol), respectively. This protein seems to be a 2Fe-2S ferredoxin. The sequence is that of 3-phenylpropionate/cinnamic acid dioxygenase ferredoxin subunit from Shigella boydii serotype 4 (strain Sb227).